Consider the following 398-residue polypeptide: Candidapepsin-2 (398 aa).

The first 18 residues, 1–18 (MFLKNIFIGLAIALLVDA), serve as a signal peptide directing secretion. The propeptide at 19 to 56 (TPTTTKRSAGFVALDFSVVKTPKAFPVTNGQEGKTSKR) is activation peptide. In terms of domain architecture, Peptidase A1 spans 70–384 (YAADITVGSN…DLDNNEISLA (315 aa)). Aspartate 88 is an active-site residue. 88 to 90 (DTG) contacts pepstatin A. Cysteine 103 and cysteine 115 are disulfide-bonded. Pepstatin A-binding positions include 141 to 142 (GD) and 274 to 278 (DSGTT). Aspartate 274 is a catalytic residue. Cysteine 312 and cysteine 350 form a disulfide bridge. Residues asparagine 313 and asparagine 321 are each glycosylated (N-linked (GlcNAc...) asparagine).

The protein belongs to the peptidase A1 family. In terms of assembly, monomer. In terms of processing, O-glycosylated.

The protein resides in the secreted. It carries out the reaction Preferential cleavage at the carboxyl of hydrophobic amino acids, but fails to cleave 15-Leu-|-Tyr-16, 16-Tyr-|-Leu-17 and 24-Phe-|-Phe-25 of insulin B chain. Activates trypsinogen, and degrades keratin.. This Candida albicans (strain WO-1) (Yeast) protein is Candidapepsin-2 (SAP2).